The chain runs to 329 residues: NAC domain-containing protein 79 (329 aa).

In terms of domain architecture, NAC spans 17-167 (LPPGFRFHPT…EWVICRVFHK (151 aa)). Residues 114–173 (VGMKKTLVFYRGRAPKGQKTNWVMHEYRLDGKLSAHNLPKTAKNEWVICRVFHKTAGGKK) mediate DNA binding.

As to expression, expressed at low levels in leaves.

Its subcellular location is the nucleus. The protein is NAC domain-containing protein 79 of Arabidopsis thaliana (Mouse-ear cress).